Consider the following 691-residue polypeptide: Beta-galactosidase III (691 aa).

Substrate contacts are provided by Arg121 and Asn159. The Proton donor role is filled by Glu160. The Nucleophile role is filled by Glu318. Substrate is bound by residues Trp326 and 366–369 (EKWH).

This sequence belongs to the glycosyl hydrolase 42 family.

The catalysed reaction is Hydrolysis of terminal non-reducing beta-D-galactose residues in beta-D-galactosides.. In terms of biological role, specific for beta-D-anomer-linked galactoside substrates. Hydrolyzes o-nitrophenyl-beta-D-galactopyranoside (ONPG), chromogen 5-bromo-4-chloro-3-indolyl-beta-D-galactopyranoside (X-gal) and to a lesser extent lactose. Hydrolyzes p-nitrophenyl-beta-D-galacturonide very slightly. Does not hydrolyze maltose, sucrose, raffinose or melibiose. Has some transgalactosylation activity yielding galacto-oligosaccharides (GaOS), including O-beta-D-galactopyranosyl-(1,3)-O-beta-D-galactopyranosyl-(1-4)-D-glucopyranose. The polypeptide is Beta-galactosidase III (Bifidobacterium longum subsp. infantis).